A 902-amino-acid polypeptide reads, in one-letter code: Protein translocase subunit SecA (902 aa).

ATP is bound by residues glutamine 89, 107 to 111, and aspartate 502; that span reads GEGKT. Positions 884, 886, 895, and 896 each coordinate Zn(2+).

The protein belongs to the SecA family. Monomer and homodimer. Part of the essential Sec protein translocation apparatus which comprises SecA, SecYEG and auxiliary proteins SecDF-YajC and YidC. Zn(2+) serves as cofactor.

The protein localises to the cell inner membrane. It is found in the cytoplasm. It catalyses the reaction ATP + H2O + cellular proteinSide 1 = ADP + phosphate + cellular proteinSide 2.. Functionally, part of the Sec protein translocase complex. Interacts with the SecYEG preprotein conducting channel. Has a central role in coupling the hydrolysis of ATP to the transfer of proteins into and across the cell membrane, serving both as a receptor for the preprotein-SecB complex and as an ATP-driven molecular motor driving the stepwise translocation of polypeptide chains across the membrane. The sequence is that of Protein translocase subunit SecA from Agrobacterium fabrum (strain C58 / ATCC 33970) (Agrobacterium tumefaciens (strain C58)).